A 561-amino-acid polypeptide reads, in one-letter code: DNA ligase B (561 aa).

The N6-AMP-lysine intermediate role is filled by Lys125.

The protein belongs to the NAD-dependent DNA ligase family. LigB subfamily.

It catalyses the reaction NAD(+) + (deoxyribonucleotide)n-3'-hydroxyl + 5'-phospho-(deoxyribonucleotide)m = (deoxyribonucleotide)n+m + AMP + beta-nicotinamide D-nucleotide.. Its function is as follows. Catalyzes the formation of phosphodiester linkages between 5'-phosphoryl and 3'-hydroxyl groups in double-stranded DNA using NAD as a coenzyme and as the energy source for the reaction. The polypeptide is DNA ligase B (Salmonella arizonae (strain ATCC BAA-731 / CDC346-86 / RSK2980)).